Reading from the N-terminus, the 215-residue chain is Ectodysplasin-A receptor-associated adapter protein (215 aa).

Disordered regions lie at residues 1-41 (MGLR…FNMS) and 62-86 (LNCP…TGDP). Positions 17-28 (GHQEDHMVKEPV) are enriched in basic and acidic residues. The Death domain maps to 123-202 (DVIRIKLDPC…KVLRRWVDEE (80 aa)).

As to quaternary structure, self-associates and binds EDAR, TRAF1, TRAF2 and TRAF3. In terms of tissue distribution, detected in adult pancreas, placenta and fetal skin, and at lower levels in lung, thymus, prostate and testis.

The protein localises to the cytoplasm. Its function is as follows. Adapter protein that interacts with EDAR DEATH domain and couples the receptor to EDA signaling pathway during morphogenesis of ectodermal organs. Mediates the activation of NF-kappa-B. In Homo sapiens (Human), this protein is Ectodysplasin-A receptor-associated adapter protein (EDARADD).